The sequence spans 155 residues: WPP domain-containing protein 1 (155 aa).

2 disordered regions span residues 1 to 41 (MAET…VTIS) and 124 to 155 (SVKA…SSEA). Low complexity predominate over residues 7-39 (ESITTSSPPPISETENSTTLPTTETEKNPNPVT). A WPP region spans residues 28–131 (TTETEKNPNP…LESVKAKSNV (104 aa)). The span at 146–155 (VDSKIDSSEA) shows a compositional bias: basic and acidic residues.

Binds to FPP proteins. Interacts with WAP, WIP1, WIP2 and WIP3 through its WPP domain. Interacts with HSP70-1, HSP70-3 and WIT1. Component of a ternary complex composed of WPP1, HSP70-1 and WIT1. In terms of tissue distribution, expressed in roots, stems and leaves.

Its subcellular location is the nucleus envelope. The protein resides in the cytoplasm. It is found in the nucleus. It localises to the golgi apparatus. The protein localises to the nucleus matrix. In terms of biological role, regulates the mitotic activity in roots. Plays a role with HSP70-1 in facilitating WIT1 nuclear envelope targeting. This chain is WPP domain-containing protein 1 (WPP1), found in Arabidopsis thaliana (Mouse-ear cress).